The primary structure comprises 949 residues: Protein translocase subunit SecA 1 (949 aa).

ATP-binding positions include Gln-86, 104-108, and Asp-493; that span reads GEGKT. A disordered region spans residues 869-949; sequence VDGGARERAP…AKPPKSVKKR (81 aa). The span at 925–934 shows a compositional bias: basic and acidic residues; that stretch reads SRRERREAAR.

This sequence belongs to the SecA family. In terms of assembly, monomer and homodimer. Part of the essential Sec protein translocation apparatus which comprises SecA, SecYEG and auxiliary proteins SecDF. Other proteins may also be involved.

The protein localises to the cell membrane. The protein resides in the cytoplasm. It catalyses the reaction ATP + H2O + cellular proteinSide 1 = ADP + phosphate + cellular proteinSide 2.. In terms of biological role, part of the Sec protein translocase complex. Interacts with the SecYEG preprotein conducting channel. Has a central role in coupling the hydrolysis of ATP to the transfer of proteins into and across the cell membrane, serving as an ATP-driven molecular motor driving the stepwise translocation of polypeptide chains across the membrane. This chain is Protein translocase subunit SecA 1, found in Mycobacterium bovis (strain ATCC BAA-935 / AF2122/97).